Here is a 1196-residue protein sequence, read N- to C-terminus: DNA-directed RNA polymerase I subunit RPA2 (1196 aa).

A C4-type zinc finger spans residues 1097–1124 (CRECGSILTTQSSVPKIGSMVTIRCRRC).

This sequence belongs to the RNA polymerase beta chain family. As to quaternary structure, component of the RNA polymerase I (Pol I) complex consisting of 14 subunits.

It localises to the nucleus. The protein localises to the nucleolus. It carries out the reaction RNA(n) + a ribonucleoside 5'-triphosphate = RNA(n+1) + diphosphate. Its function is as follows. DNA-dependent RNA polymerase catalyzes the transcription of DNA into RNA using the four ribonucleoside triphosphates as substrates. Second largest core component of RNA polymerase I which synthesizes ribosomal RNA precursors. Proposed to contribute to the polymerase catalytic activity and forms the polymerase active center together with the largest subunit. Pol I is composed of mobile elements and RPA2 is part of the core element with the central large cleft and probably a clamp element that moves to open and close the cleft. The polypeptide is DNA-directed RNA polymerase I subunit RPA2 (RPA2) (Eremothecium gossypii (strain ATCC 10895 / CBS 109.51 / FGSC 9923 / NRRL Y-1056) (Yeast)).